The following is a 122-amino-acid chain: Large ribosomal subunit protein uL14 (122 aa).

The protein belongs to the universal ribosomal protein uL14 family. As to quaternary structure, part of the 50S ribosomal subunit. Forms a cluster with proteins L3 and L19. In the 70S ribosome, L14 and L19 interact and together make contacts with the 16S rRNA in bridges B5 and B8.

Binds to 23S rRNA. Forms part of two intersubunit bridges in the 70S ribosome. The polypeptide is Large ribosomal subunit protein uL14 (Treponema denticola (strain ATCC 35405 / DSM 14222 / CIP 103919 / JCM 8153 / KCTC 15104)).